We begin with the raw amino-acid sequence, 431 residues long: MANSC domain-containing protein 1 (431 aa).

Residues methionine 1–serine 26 form the signal peptide. The Extracellular segment spans residues glutamine 27 to leucine 385. One can recognise an MANSC domain in the interval serine 33–tyrosine 117. Asparagine 72, asparagine 222, and asparagine 251 each carry an N-linked (GlcNAc...) asparagine glycan. Positions serine 234–glutamine 277 are disordered. Polar residues predominate over residues leucine 248–glutamine 261. Residues proline 262–glutamine 277 show a composition bias toward low complexity. N-linked (GlcNAc...) asparagine glycosylation is found at asparagine 327 and asparagine 352. The interval asparagine 352–valine 372 is disordered. Residues leucine 386 to leucine 408 traverse the membrane as a helical segment. The Cytoplasmic portion of the chain corresponds to serine 409–isoleucine 431.

As to expression, widely expressed.

The protein localises to the membrane. This chain is MANSC domain-containing protein 1 (MANSC1), found in Homo sapiens (Human).